The sequence spans 446 residues: MSHHLCIWLFRNPFLRACPQRHVFLSCQQFRQISLDTRPWNFRQKKTHVLYQLLNKSWSRGCCHQGTRKLWKHKALQKYMEDLNKEYQTLDQCLQGISENEGDRRALHRRHAQLAPLAAVYQEIQEAEQAIEELESLCKSLNKQDEKQLQELVSEERQIIDQKIHRLYSELLERLVPKEKYDWSDVILEVTSGRTTGGDICQQFTREIFDMYQNYSYYKHWKFELLNYTPADYGGLHHAAARISGDSVYKHLKYEGGIHRVQRIPEVGLSSRMQRIHTGTMSVIVLPQPDEVDVKVDPKDLRVDTFRARGAGGQHVNTTDSAVRLVHIPTGLVVECQQERSQLKNKEIALRVLRARLYQQIIEKDRCQQQNARKLQVGTRAQSERIRTYNFTQDRVTDHRIAYEVRDIKEFLRGEKCLDQLIERLLQSADEEAISEFLDESLQSVK.

A mitochondrion-targeting transit peptide spans 1–62; the sequence is MSHHLCIWLF…LLNKSWSRGC (62 aa). The GGQ domain stretch occupies residues 298 to 362; it reads PKDLRVDTFR…LRARLYQQII (65 aa). The GGQ signature appears at 312-314; that stretch reads GGQ. Gln-314 is modified (N5-methylglutamine).

Belongs to the prokaryotic/mitochondrial release factor family. Post-translationally, methylation of glutamine in the GGQ triplet by HEMK1 is conserved from bacteria to mammals.

The protein resides in the mitochondrion. Mitochondrial peptide chain release factor that directs the termination of translation in response to the peptide chain non-canonical stop codons AGG and AGA. Non-canonical termination codons AGG and AGA are found at the end of MT-CO1/COX1 and MT-ND6/ND6 open reading frames, respectively. Recognizes non-canonical stop codons via a network of interactions between the codon, MTRF1 and the ribosomal RNA (rRNA): in contrast to other translation release factors, which identify the codon in the A-site via direct interactions of amino acid side chains with the bases, MTRF1 repositions the first 2 bases of the stop codon to use an intricate network of interactions that includes residues of the release factor, the rRNA of the small ribosomal subunit, as well as neighboring bases of the mRNA. The polypeptide is Peptide chain release factor 1, mitochondrial (Mus musculus (Mouse)).